A 373-amino-acid polypeptide reads, in one-letter code: tRNA-specific 2-thiouridylase MnmA (373 aa).

ATP-binding positions include 12–19 and methionine 38; that span reads GMSGGVDS. The interaction with target base in tRNA stretch occupies residues 98 to 100; the sequence is NPD. The active-site Nucleophile is cysteine 103. Cysteine 103 and cysteine 200 are joined by a disulfide. ATP is bound at residue glycine 127. The interaction with tRNA stretch occupies residues 150–152; it reads KDQ. Cysteine 200 functions as the Cysteine persulfide intermediate in the catalytic mechanism. The interaction with tRNA stretch occupies residues 312 to 313; sequence RY.

Belongs to the MnmA/TRMU family.

It localises to the cytoplasm. It catalyses the reaction S-sulfanyl-L-cysteinyl-[protein] + uridine(34) in tRNA + AH2 + ATP = 2-thiouridine(34) in tRNA + L-cysteinyl-[protein] + A + AMP + diphosphate + H(+). Its function is as follows. Catalyzes the 2-thiolation of uridine at the wobble position (U34) of tRNA, leading to the formation of s(2)U34. This is tRNA-specific 2-thiouridylase MnmA from Streptococcus thermophilus (strain CNRZ 1066).